A 602-amino-acid polypeptide reads, in one-letter code: T-box transcription factor TBX15 (602 aa).

The disordered stretch occupies residues 43–95 (SMEALSPAGPLGDTDDPATHGLEPHPDSEQSTGSDSEVLTERTSCSFSTHTDL). The span at 71-94 (EQSTGSDSEVLTERTSCSFSTHTD) shows a compositional bias: polar residues. Residues 122 to 304 (LWKRFHDIGT…RNPFAKGFRD (183 aa)) constitute a DNA-binding region (T-box). Position 330 is a phosphothreonine (Thr330). 2 disordered regions span residues 338 to 369 (QKQQ…LSPS) and 425 to 444 (QSGT…QRTP). The span at 346–369 (GTSPTTSSTGTPSPSASSHLLSPS) shows a compositional bias: low complexity.

Can form a heterodimer with TBX18.

It localises to the nucleus. In terms of biological role, probable transcriptional regulator involved in the development of the skeleton of the limb, vertebral column and head. Acts by controlling the number of mesenchymal precursor cells and chondrocytes. This chain is T-box transcription factor TBX15 (Tbx15), found in Mus musculus (Mouse).